Here is a 210-residue protein sequence, read N- to C-terminus: PITH domain-containing protein 1 (210 aa).

The PITH domain occupies His19–Ala191.

Belongs to the PITHD1 family.

Its subcellular location is the cytoplasm. Functionally, may play a role in promoting megakaryocyte differentiation by up-regulating RUNX1 expression. This Danio rerio (Zebrafish) protein is PITH domain-containing protein 1 (pithd1).